The primary structure comprises 489 residues: Probable anthranilate synthase component 1 (489 aa).

L-tryptophan contacts are provided by residues Ser54 and 262–264 (PYM). Chorismate is bound at residue 297-298 (GT). Glu324 serves as a coordination point for Mg(2+). Residues Ser390 and Ser392 each carry the phosphoserine modification. Residues Tyr412, Arg433, 447–449 (GGG), and Gly449 each bind chorismate. Glu462 serves as a coordination point for Mg(2+). Residue Ser488 is modified to Phosphoserine.

Belongs to the anthranilate synthase component I family. In terms of assembly, tetramer of two components I and two components II. The cofactor is Mg(2+).

It catalyses the reaction chorismate + L-glutamine = anthranilate + pyruvate + L-glutamate + H(+). The protein operates within amino-acid biosynthesis; L-tryptophan biosynthesis; L-tryptophan from chorismate: step 1/5. The sequence is that of Probable anthranilate synthase component 1 (trp3) from Schizosaccharomyces pombe (strain 972 / ATCC 24843) (Fission yeast).